The sequence spans 512 residues: 2-isopropylmalate synthase (512 aa).

The region spanning 5 to 268 is the Pyruvate carboxyltransferase domain; that stretch reads LIIFDTTLRD…DVGIDTQHIV (264 aa). 4 residues coordinate Mn(2+): aspartate 14, histidine 202, histidine 204, and asparagine 239. The interval 394–512 is regulatory domain; sequence GFVSLAQHSE…SKAERVAAQG (119 aa).

This sequence belongs to the alpha-IPM synthase/homocitrate synthase family. LeuA type 1 subfamily. Homodimer. Mn(2+) is required as a cofactor.

The protein resides in the cytoplasm. The enzyme catalyses 3-methyl-2-oxobutanoate + acetyl-CoA + H2O = (2S)-2-isopropylmalate + CoA + H(+). Its pathway is amino-acid biosynthesis; L-leucine biosynthesis; L-leucine from 3-methyl-2-oxobutanoate: step 1/4. In terms of biological role, catalyzes the condensation of the acetyl group of acetyl-CoA with 3-methyl-2-oxobutanoate (2-ketoisovalerate) to form 3-carboxy-3-hydroxy-4-methylpentanoate (2-isopropylmalate). The chain is 2-isopropylmalate synthase from Acidovorax ebreus (strain TPSY) (Diaphorobacter sp. (strain TPSY)).